A 471-amino-acid polypeptide reads, in one-letter code: ATP synthase subunit beta (471 aa).

ATP is bound at residue 153–160 (GGAGVGKT).

The protein belongs to the ATPase alpha/beta chains family. F-type ATPases have 2 components, CF(1) - the catalytic core - and CF(0) - the membrane proton channel. CF(1) has five subunits: alpha(3), beta(3), gamma(1), delta(1), epsilon(1). CF(0) has three main subunits: a(1), b(2) and c(9-12). The alpha and beta chains form an alternating ring which encloses part of the gamma chain. CF(1) is attached to CF(0) by a central stalk formed by the gamma and epsilon chains, while a peripheral stalk is formed by the delta and b chains.

The protein localises to the cell membrane. The enzyme catalyses ATP + H2O + 4 H(+)(in) = ADP + phosphate + 5 H(+)(out). Produces ATP from ADP in the presence of a proton gradient across the membrane. The catalytic sites are hosted primarily by the beta subunits. The polypeptide is ATP synthase subunit beta (Levilactobacillus brevis (strain ATCC 367 / BCRC 12310 / CIP 105137 / JCM 1170 / LMG 11437 / NCIMB 947 / NCTC 947) (Lactobacillus brevis)).